A 428-amino-acid chain; its full sequence is MSAFIVLGAQWGDEGKGKMTDYLAENADVVVRFQGGNNAGHTVVVGEKEYKLHLIPSGILYNDKLNVIGNGVVLDPKALFEEINYLESLGVEITPDRLIISDRAHVIMPYHRVLDGIKERARGNKDIGTTGKGIGPSYTDKMERSGIRVCDLIHKEVFEENLKETLEVKNKIITEVFGGEALDYNEIYNEYLGYAEKLRPFVKDISVIVNKKIKDGKEVLFEGAQGTLLDIDYGTYPYVTSSSTIAGGVCIGAGVGPTAITNAVGIAKAYTTRVGKGPFPTELLDSTGDWVREKGHEFGVTTGRARRCGWLDLVILKTSARISGLTSFAVTKIDTLAGLDTLKVCTGYRLNGEIIDYVPASLEDLAKCEPIYEEFEGWDDSIANARCYEDLPENAIKYLKKIEDFTETKVSIVSVGPKRDQTMMISEI.

Residues 12-18 (GDEGKGK) and 40-42 (GHT) contribute to the GTP site. D13 serves as the catalytic Proton acceptor. Residues D13 and G40 each contribute to the Mg(2+) site. Residues 13–16 (DEGK), 38–41 (NAGH), T130, R144, Q225, T240, and R304 contribute to the IMP site. H41 (proton donor) is an active-site residue. 300 to 306 (VTTGRAR) contacts substrate. Residues R306, 332–334 (KID), and 414–416 (SVG) each bind GTP.

Belongs to the adenylosuccinate synthetase family. Homodimer. Mg(2+) is required as a cofactor.

It is found in the cytoplasm. The enzyme catalyses IMP + L-aspartate + GTP = N(6)-(1,2-dicarboxyethyl)-AMP + GDP + phosphate + 2 H(+). Its pathway is purine metabolism; AMP biosynthesis via de novo pathway; AMP from IMP: step 1/2. Its function is as follows. Plays an important role in the de novo pathway of purine nucleotide biosynthesis. Catalyzes the first committed step in the biosynthesis of AMP from IMP. The chain is Adenylosuccinate synthetase from Clostridium botulinum (strain Okra / Type B1).